Consider the following 120-residue polypeptide: Spermidine export protein MdtJ (120 aa).

Transmembrane regions (helical) follow at residues 1-21, 31-51, 54-74, and 81-101; these read MFYW…TLSM, AGFI…SFAV, IALG…ITIF, and EALS…IVLI.

It belongs to the drug/metabolite transporter (DMT) superfamily. Small multidrug resistance (SMR) (TC 2.A.7.1) family. MdtJ subfamily. Forms a complex with MdtI.

The protein localises to the cell inner membrane. Catalyzes the excretion of spermidine. The protein is Spermidine export protein MdtJ of Salmonella paratyphi A (strain ATCC 9150 / SARB42).